Consider the following 124-residue polypeptide: Histone H2B, embryonic (124 aa).

The disordered stretch occupies residues 1–31 (MAPTAQVAKKGSKKAVKGTKTAXGGKKRNRK). Residue Ser111 is glycosylated (O-linked (GlcNAc) serine). Residue Lys119 forms a Glycyl lysine isopeptide (Lys-Gly) (interchain with G-Cter in ubiquitin) linkage.

The protein belongs to the histone H2B family. In terms of assembly, the nucleosome is a histone octamer containing two molecules each of H2A, H2B, H3 and H4 assembled in one H3-H4 heterotetramer and two H2A-H2B heterodimers. The octamer wraps approximately 147 bp of DNA. In terms of processing, monoubiquitination of Lys-119 gives a specific tag for epigenetic transcriptional activation and is also prerequisite for histone H3 'Lys-4' and 'Lys-79' methylation. GlcNAcylation at Ser-111 promotes monoubiquitination of Lys-119. It fluctuates in response to extracellular glucose, and associates with transcribed genes.

It localises to the nucleus. Its subcellular location is the chromosome. Functionally, core component of nucleosome. Nucleosomes wrap and compact DNA into chromatin, limiting DNA accessibility to the cellular machineries which require DNA as a template. Histones thereby play a central role in transcription regulation, DNA repair, DNA replication and chromosomal stability. DNA accessibility is regulated via a complex set of post-translational modifications of histones, also called histone code, and nucleosome remodeling. The chain is Histone H2B, embryonic from Strongylocentrotus purpuratus (Purple sea urchin).